The chain runs to 434 residues: RNA-binding protein SRO9 (434 aa).

A compositionally biased stretch (low complexity) spans 1-13; it reads MSAETAAANTATA. The segment at 1 to 243 is disordered; the sequence is MSAETAAANT…FHHNQQHPQQ (243 aa). The segment covering 26–41 has biased composition (polar residues); it reads SKQVNLTPAPLPTSSP. Ser55 carries the phosphoserine modification. Residues 93–124 are compositionally biased toward low complexity; that stretch reads KRSGSKNGASNGNSNKSKNNKTAASSTSSSNA. The span at 125 to 140 shows a compositional bias: basic residues; that stretch reads NRKKKHHQHNAKKQQQ. Residue Ser148 is modified to Phosphoserine. Lys156 is covalently cross-linked (Glycyl lysine isopeptide (Lys-Gly) (interchain with G-Cter in ubiquitin)). Positions 158-167 are enriched in polar residues; it reads ATSQENGQST. The span at 173 to 195 shows a compositional bias: basic residues; that stretch reads PHHRNHHHSHHHNSNGPQRRKFH. Residues 196-208 show a composition bias toward polar residues; the sequence is NSNNAGMPQNQGF. Residues 218–227 show a composition bias toward low complexity; that stretch reads RNARNNNNNR. The span at 228 to 238 shows a compositional bias: basic residues; that stretch reads SKYHNHFHHNQ. Residues 255 to 351 form the HTH La-type RNA-binding domain; that stretch reads VQPVLMAINN…KEGDNVTGEA (97 aa). Glycyl lysine isopeptide (Lys-Gly) (interchain with G-Cter in ubiquitin) cross-links involve residues Lys301, Lys342, and Lys352. Residues 396–434 are disordered; sequence SLPPVPQQEEESSTELASQEQETKEDSAPVAAGESESSL. At Ser422 the chain carries Phosphoserine.

Interacts with HAP1. Component of the HMC including HAP1, SRO9 and YDJ1.

It is found in the cytoplasm. May overlap in function with tropomyosin and may be involved in organization of actin filaments. Acts as a multicopy suppressor of RHO3 mutation. RNA-binding protein which may modulate mRNA translation. Involved in heme regulation of HAP1, as a component of the high-molecular-weight complex (HMC). This chain is RNA-binding protein SRO9 (SRO9), found in Saccharomyces cerevisiae (strain ATCC 204508 / S288c) (Baker's yeast).